The following is a 386-amino-acid chain: Probable dual-specificity RNA methyltransferase RlmN (386 aa).

E123 serves as the catalytic Proton acceptor. In terms of domain architecture, Radical SAM core spans 129–372 (YPTRTTLCIS…ATLRDTRGQD (244 aa)). Cysteines 136 and 377 form a disulfide. Residues C143, C147, and C150 each coordinate [4Fe-4S] cluster. Residues 198 to 199 (GE), S232, 255 to 257 (SLH), and N334 contribute to the S-adenosyl-L-methionine site. Catalysis depends on C377, which acts as the S-methylcysteine intermediate.

Belongs to the radical SAM superfamily. RlmN family. [4Fe-4S] cluster serves as cofactor.

Its subcellular location is the cytoplasm. The catalysed reaction is adenosine(2503) in 23S rRNA + 2 reduced [2Fe-2S]-[ferredoxin] + 2 S-adenosyl-L-methionine = 2-methyladenosine(2503) in 23S rRNA + 5'-deoxyadenosine + L-methionine + 2 oxidized [2Fe-2S]-[ferredoxin] + S-adenosyl-L-homocysteine. It catalyses the reaction adenosine(37) in tRNA + 2 reduced [2Fe-2S]-[ferredoxin] + 2 S-adenosyl-L-methionine = 2-methyladenosine(37) in tRNA + 5'-deoxyadenosine + L-methionine + 2 oxidized [2Fe-2S]-[ferredoxin] + S-adenosyl-L-homocysteine. Functionally, specifically methylates position 2 of adenine 2503 in 23S rRNA and position 2 of adenine 37 in tRNAs. The chain is Probable dual-specificity RNA methyltransferase RlmN from Bifidobacterium adolescentis (strain ATCC 15703 / DSM 20083 / NCTC 11814 / E194a).